The primary structure comprises 336 residues: Holliday junction branch migration complex subunit RuvB (336 aa).

Residues 4-184 (ADRLISATGV…FGIVQRLEFY (181 aa)) form a large ATPase domain (RuvB-L) region. Residues Ile-23, Arg-24, Gly-65, Lys-68, Thr-69, Thr-70, 131–133 (EDY), Arg-174, Tyr-184, and Arg-221 contribute to the ATP site. Residue Thr-69 participates in Mg(2+) binding. The tract at residues 185–255 (NVKDLTDIVS…IAARAMDMLD (71 aa)) is small ATPAse domain (RuvB-S). A head domain (RuvB-H) region spans residues 258–336 (NEGFDFMDRK…HFGLQRPDER (79 aa)). DNA contacts are provided by Arg-313 and Arg-318.

Belongs to the RuvB family. Homohexamer. Forms an RuvA(8)-RuvB(12)-Holliday junction (HJ) complex. HJ DNA is sandwiched between 2 RuvA tetramers; dsDNA enters through RuvA and exits via RuvB. An RuvB hexamer assembles on each DNA strand where it exits the tetramer. Each RuvB hexamer is contacted by two RuvA subunits (via domain III) on 2 adjacent RuvB subunits; this complex drives branch migration. In the full resolvosome a probable DNA-RuvA(4)-RuvB(12)-RuvC(2) complex forms which resolves the HJ.

The protein localises to the cytoplasm. It carries out the reaction ATP + H2O = ADP + phosphate + H(+). In terms of biological role, the RuvA-RuvB-RuvC complex processes Holliday junction (HJ) DNA during genetic recombination and DNA repair, while the RuvA-RuvB complex plays an important role in the rescue of blocked DNA replication forks via replication fork reversal (RFR). RuvA specifically binds to HJ cruciform DNA, conferring on it an open structure. The RuvB hexamer acts as an ATP-dependent pump, pulling dsDNA into and through the RuvAB complex. RuvB forms 2 homohexamers on either side of HJ DNA bound by 1 or 2 RuvA tetramers; 4 subunits per hexamer contact DNA at a time. Coordinated motions by a converter formed by DNA-disengaged RuvB subunits stimulates ATP hydrolysis and nucleotide exchange. Immobilization of the converter enables RuvB to convert the ATP-contained energy into a lever motion, pulling 2 nucleotides of DNA out of the RuvA tetramer per ATP hydrolyzed, thus driving DNA branch migration. The RuvB motors rotate together with the DNA substrate, which together with the progressing nucleotide cycle form the mechanistic basis for DNA recombination by continuous HJ branch migration. Branch migration allows RuvC to scan DNA until it finds its consensus sequence, where it cleaves and resolves cruciform DNA. The chain is Holliday junction branch migration complex subunit RuvB from Aeromonas salmonicida (strain A449).